The sequence spans 487 residues: MAAPESLSPGATAEEAPEEDEDDAEAEDPERGTGSGGRSGSLGGSGGGTAGPGMALGGALTRRAVTLRVLLKDELLEPGEGVLSIYYLGRKFTGDLQLDGRIVWQETGQVFNSPSAWATHCKKLVNPAKKSGCGWASVKYKGQKLDKYKAAWLRRHQLHMPVATADESPTSEGEEEELLLEEEEEDVLAGVSSEDKGHRPPGKGSLEPEATPPGKRMDKVPVPIRYCMLGSRDSARNPHTLVEVTSFAAINKFQPFNVAVSSNVLFLLDFHCHLTRSEVVGYLGGRWDINNQMLTVLRAFPCRSRLGDTDTAATVEEEIYQVLFLRGLSLVGWYHSHPHSPAVPSLQDIDAQMEYQLRLQGSSNGFQPCLALLCSPYYSGNPGPESKICPFWVMPPPEQRPSDYGIPMDVEMAYVQDSFLTNDVLQEMVMLAEFYKGAPDLVKFQEAWSPEHTYLDKLKMSLASRTPKDQGMCHVLEQVCSVLKQGS.

The segment at 1–55 (MAAPESLSPGATAEEAPEEDEDDAEAEDPERGTGSGGRSGSLGGSGGGTAGPGMA) is disordered. Alanine 2 carries the N-acetylalanine modification. Serine 8 bears the Phosphoserine mark. Over residues 15 to 28 (EAPEEDEDDAEAED) the composition is skewed to acidic residues. A compositionally biased stretch (gly residues) spans 33–55 (TGSGGRSGSLGGSGGGTAGPGMA). Residues 61–156 (TRRAVTLRVL…KYKAAWLRRH (96 aa)) enclose the RAMA domain. 3 residues coordinate DNA: serine 113, serine 115, and tryptophan 135. Residues 163-217 (ATADESPTSEGEEEELLLEEEEEDVLAGVSSEDKGHRPPGKGSLEPEATPPGKRM) form a disordered region. Residues serine 168 and serine 171 each carry the phosphoserine modification. Positions 172 to 187 (EGEEEELLLEEEEEDV) are enriched in acidic residues. Residues 258–393 (VAVSSNVLFL…PESKICPFWV (136 aa)) form the MPN domain. Positions 335, 337, and 348 each coordinate Zn(2+). The JAMM motif signature appears at 335–348 (HSHPHSPAVPSLQD).

Belongs to the peptidase M67 family. As to quaternary structure, monomer. Mainly monomoric, but when binds to dsDNA, forms homotetramer assembled into two homodimers. May interact with histones; this interaction is facilitated by. Post-translationally, degraded following binding to N(6)-methyladenosine methylated DNA (m6A).

Functionally, probable protease. Acts as a sensor of N(6)-methyladenosine methylation on DNA (m6A): recognizes and binds m6A DNA, leading to its degradation. Binds only double strand DNA (dsDNA) in a sequence-independent manner. This chain is MPN domain-containing protein, found in Mus musculus (Mouse).